We begin with the raw amino-acid sequence, 38 residues long: Photosystem II reaction center protein L (38 aa).

Residues 17–37 (SLFIGLLLVLVLALLFSSYFF) form a helical membrane-spanning segment.

It belongs to the PsbL family. As to quaternary structure, PSII is composed of 1 copy each of membrane proteins PsbA, PsbB, PsbC, PsbD, PsbE, PsbF, PsbH, PsbI, PsbJ, PsbK, PsbL, PsbM, PsbT, PsbX, PsbY, PsbZ, Psb30/Ycf12, peripheral proteins PsbO, CyanoQ (PsbQ), PsbU, PsbV and a large number of cofactors. It forms dimeric complexes.

Its subcellular location is the cellular thylakoid membrane. Its function is as follows. One of the components of the core complex of photosystem II (PSII). PSII is a light-driven water:plastoquinone oxidoreductase that uses light energy to abstract electrons from H(2)O, generating O(2) and a proton gradient subsequently used for ATP formation. It consists of a core antenna complex that captures photons, and an electron transfer chain that converts photonic excitation into a charge separation. This subunit is found at the monomer-monomer interface and is required for correct PSII assembly and/or dimerization. The sequence is that of Photosystem II reaction center protein L from Acaryochloris marina (strain MBIC 11017).